Here is a 338-residue protein sequence, read N- to C-terminus: Glycerol-3-phosphate dehydrogenase [NAD(P)+] (338 aa).

Residues serine 14, phenylalanine 15, arginine 35, and lysine 109 each coordinate NADPH. Sn-glycerol 3-phosphate contacts are provided by lysine 109 and glycine 137. Alanine 141 contacts NADPH. Residues lysine 192, aspartate 247, serine 257, arginine 258, and asparagine 259 each contribute to the sn-glycerol 3-phosphate site. Lysine 192 acts as the Proton acceptor in catalysis. An NADPH-binding site is contributed by arginine 258. 2 residues coordinate NADPH: leucine 282 and glutamate 284.

Belongs to the NAD-dependent glycerol-3-phosphate dehydrogenase family.

It is found in the cytoplasm. The enzyme catalyses sn-glycerol 3-phosphate + NAD(+) = dihydroxyacetone phosphate + NADH + H(+). It catalyses the reaction sn-glycerol 3-phosphate + NADP(+) = dihydroxyacetone phosphate + NADPH + H(+). Its pathway is membrane lipid metabolism; glycerophospholipid metabolism. Catalyzes the reduction of the glycolytic intermediate dihydroxyacetone phosphate (DHAP) to sn-glycerol 3-phosphate (G3P), the key precursor for phospholipid synthesis. The chain is Glycerol-3-phosphate dehydrogenase [NAD(P)+] from Rickettsia rickettsii (strain Iowa).